Reading from the N-terminus, the 428-residue chain is Stromal membrane-associated protein 2 (428 aa).

The region spanning 13-139 is the Arf-GAP domain; it reads QAVLANLLLE…INVLRKEKDD (127 aa). The C4-type zinc-finger motif lies at 28 to 51; the sequence is CADCQSKGPRWASWNIGVFICIRC. Ser-127, Ser-219, Ser-224, Ser-230, and Ser-239 each carry phosphoserine. Residues 163–231 form an interaction with clathrin heavy chains region; the sequence is MPQKKEDAQL…SVSRKAVGSM (69 aa). Residues 218-262 form a disordered region; sequence PSPSSVSRKAVGSMPTAGSAGSVPENLNLFPEPGSKSEETGKKQL. Residues 252–262 are compositionally biased toward basic and acidic residues; it reads SKSEETGKKQL. Residues 339–428 form an interaction with PICALM region; the sequence is MGGMQASMMG…NQTLSPQMWK (90 aa).

In terms of assembly, interacts with ARF1. Interacts with PICALM and clathrin heavy chains.

It localises to the cytoplasm. Its function is as follows. GTPase activating protein that acts on ARF1. Can also activate ARF6 (in vitro). May play a role in clathrin-dependent retrograde transport from early endosomes to the trans-Golgi network. The chain is Stromal membrane-associated protein 2 (Smap2) from Mus musculus (Mouse).